Consider the following 266-residue polypeptide: Pyridoxal phosphate phosphatase YigL (266 aa).

Asp-8 functions as the Nucleophile in the catalytic mechanism. Asp-8 provides a ligand contact to Mg(2+). Position 9 (Leu-9) interacts with phosphate. Asp-10 is a Mg(2+) binding site. Phosphate is bound by residues 42–43 and Lys-191; that span reads TG. A Mg(2+)-binding site is contributed by Asp-214. Residue Asn-217 participates in phosphate binding.

This sequence belongs to the HAD-like hydrolase superfamily. Cof family. The cofactor is Mg(2+). Mn(2+) is required as a cofactor. Co(2+) serves as cofactor. It depends on Zn(2+) as a cofactor.

It catalyses the reaction pyridoxal 5'-phosphate + H2O = pyridoxal + phosphate. It carries out the reaction sugar phosphate + H2O = sugar + phosphate.. Functionally, catalyzes Strongly the dephosphorylation of pyridoxal-phosphate (PLP) and moderately the dephosphorylation of 2-deoxyglucose 6-phosphate (2bGLU6P) and beta-glucose 6-phosphate (bGlu6P). Also hydrolyzes both purines (GMP and IMP) and pyrimidines as secondary substrates. The chain is Pyridoxal phosphate phosphatase YigL (yigL) from Escherichia coli (strain K12).